The sequence spans 1204 residues: DNA-directed RNA polymerase subunit beta' (1204 aa).

Positions 60, 62, 75, and 78 each coordinate Zn(2+). Mg(2+)-binding residues include D449, D451, and D453. Zn(2+)-binding residues include C819, C893, C900, and C903.

It belongs to the RNA polymerase beta' chain family. The RNAP catalytic core consists of 2 alpha, 1 beta, 1 beta' and 1 omega subunit. When a sigma factor is associated with the core the holoenzyme is formed, which can initiate transcription. Requires Mg(2+) as cofactor. Zn(2+) is required as a cofactor.

The enzyme catalyses RNA(n) + a ribonucleoside 5'-triphosphate = RNA(n+1) + diphosphate. Its function is as follows. DNA-dependent RNA polymerase catalyzes the transcription of DNA into RNA using the four ribonucleoside triphosphates as substrates. In Bacillus cytotoxicus (strain DSM 22905 / CIP 110041 / 391-98 / NVH 391-98), this protein is DNA-directed RNA polymerase subunit beta'.